A 278-amino-acid polypeptide reads, in one-letter code: HTH-type transcriptional regulator HdfR (278 aa).

An HTH lysR-type domain is found at 1-58; that stretch reads MDTELLKTFLEVSRTRHFGRAAEALYLTQSAVSFRIRQLENQLGVNLFTRHRNNIRLT. A DNA-binding region (H-T-H motif) is located at residues 18–37; that stretch reads FGRAAEALYLTQSAVSFRIR.

It belongs to the LysR transcriptional regulatory family.

Its function is as follows. Negatively regulates the transcription of the flagellar master operon flhDC by binding to the upstream region of the operon. This is HTH-type transcriptional regulator HdfR from Salmonella dublin (strain CT_02021853).